Here is a 101-residue protein sequence, read N- to C-terminus: MIVPLGQVLMLAGLLFVAGLVGVLLRRNLIMILIGVEIMLNAVGLVLVGASAYWRHPDGQLVALLLMAVAAAEVTIALALVVYLKRSRGTIDINRFDGMKG.

3 helical membrane passes run 5–25 (LGQVLMLAGLLFVAGLVGVLL), 29–49 (LIMILIGVEIMLNAVGLVLVG), and 62–82 (VALLLMAVAAAEVTIALALVV).

Belongs to the complex I subunit 4L family. In terms of assembly, NDH-1 is composed of 14 different subunits. Subunits NuoA, H, J, K, L, M, N constitute the membrane sector of the complex.

Its subcellular location is the cell inner membrane. The enzyme catalyses a quinone + NADH + 5 H(+)(in) = a quinol + NAD(+) + 4 H(+)(out). Its function is as follows. NDH-1 shuttles electrons from NADH, via FMN and iron-sulfur (Fe-S) centers, to quinones in the respiratory chain. The immediate electron acceptor for the enzyme in this species is believed to be ubiquinone. Couples the redox reaction to proton translocation (for every two electrons transferred, four hydrogen ions are translocated across the cytoplasmic membrane), and thus conserves the redox energy in a proton gradient. In Syntrophotalea carbinolica (strain DSM 2380 / NBRC 103641 / GraBd1) (Pelobacter carbinolicus), this protein is NADH-quinone oxidoreductase subunit K.